We begin with the raw amino-acid sequence, 112 residues long: Large ribosomal subunit protein eL30 (112 aa).

The protein belongs to the eukaryotic ribosomal protein eL30 family.

In Lupinus luteus (European yellow lupine), this protein is Large ribosomal subunit protein eL30 (RPL30).